Here is a 345-residue protein sequence, read N- to C-terminus: S-adenosylmethionine:tRNA ribosyltransferase-isomerase (345 aa).

This sequence belongs to the QueA family. Monomer.

The protein localises to the cytoplasm. It carries out the reaction 7-aminomethyl-7-carbaguanosine(34) in tRNA + S-adenosyl-L-methionine = epoxyqueuosine(34) in tRNA + adenine + L-methionine + 2 H(+). It functions in the pathway tRNA modification; tRNA-queuosine biosynthesis. Transfers and isomerizes the ribose moiety from AdoMet to the 7-aminomethyl group of 7-deazaguanine (preQ1-tRNA) to give epoxyqueuosine (oQ-tRNA). The sequence is that of S-adenosylmethionine:tRNA ribosyltransferase-isomerase from Thermodesulfovibrio yellowstonii (strain ATCC 51303 / DSM 11347 / YP87).